A 459-amino-acid polypeptide reads, in one-letter code: MRNDPFQRLGLDREVLTVSQLNQRARLLLEDVFPQVWVEGELSNLARPASGHVYFTLKDSNAQIRCALFRQNALRVRQALRDGLAVKVRGKISLFEGRGDYQLIADTVEPAGDGALRLAFEALKEKLAGEGLFASERKRLLPAHPRRIGIVSSPSGAVIRDIISVFRRRAPQVELTLVPTAVQGREAVAQIVRALQLADRQGFDALILARGGGSLEDLWCFNEEAVARAVAACATPIVSAVGHETDVSISDFVADVRAPTPSAAAELLAPNAGDLQQRLDGLRRRLVLRMRDQLLRERLRLEGVARRLRHPGERLRQQAQRLDDLDMRLRRAFERQLAVRHERLVRLETRLAAQHPGRTLALLRQKLDSLAARLPRAAREVLKDRRQRLEGLAQTLNVVSPLATLGRGYSILLDERGRAIRDAGQTQPGQRLKARLAEGELEVRVEDNHRTPVTLSLLD.

Belongs to the XseA family. As to quaternary structure, heterooligomer composed of large and small subunits.

The protein resides in the cytoplasm. The catalysed reaction is Exonucleolytic cleavage in either 5'- to 3'- or 3'- to 5'-direction to yield nucleoside 5'-phosphates.. In terms of biological role, bidirectionally degrades single-stranded DNA into large acid-insoluble oligonucleotides, which are then degraded further into small acid-soluble oligonucleotides. The protein is Exodeoxyribonuclease 7 large subunit of Pseudomonas aeruginosa (strain LESB58).